Here is a 195-residue protein sequence, read N- to C-terminus: Peptidyl-tRNA hydrolase (195 aa).

TRNA is bound at residue Tyr18. His23 acts as the Proton acceptor in catalysis. Tyr69, Asn71, and Asn117 together coordinate tRNA.

Belongs to the PTH family. In terms of assembly, monomer.

It localises to the cytoplasm. It catalyses the reaction an N-acyl-L-alpha-aminoacyl-tRNA + H2O = an N-acyl-L-amino acid + a tRNA + H(+). Its function is as follows. Hydrolyzes ribosome-free peptidyl-tRNAs (with 1 or more amino acids incorporated), which drop off the ribosome during protein synthesis, or as a result of ribosome stalling. Functionally, catalyzes the release of premature peptidyl moieties from peptidyl-tRNA molecules trapped in stalled 50S ribosomal subunits, and thus maintains levels of free tRNAs and 50S ribosomes. The polypeptide is Peptidyl-tRNA hydrolase (Nitrosomonas europaea (strain ATCC 19718 / CIP 103999 / KCTC 2705 / NBRC 14298)).